Here is a 357-residue protein sequence, read N- to C-terminus: Anthranilate phosphoribosyltransferase (357 aa).

Residues G94, 97-98 (GD), T102, 104-107 (NLST), 122-130 (KHGNRAASS), and G134 contribute to the 5-phospho-alpha-D-ribose 1-diphosphate site. Position 94 (G94) interacts with anthranilate. Residue S106 coordinates Mg(2+). Anthranilate is bound at residue N125. R180 lines the anthranilate pocket. D238 and E239 together coordinate Mg(2+).

The protein belongs to the anthranilate phosphoribosyltransferase family. Homodimer. Mg(2+) is required as a cofactor.

It carries out the reaction N-(5-phospho-beta-D-ribosyl)anthranilate + diphosphate = 5-phospho-alpha-D-ribose 1-diphosphate + anthranilate. It functions in the pathway amino-acid biosynthesis; L-tryptophan biosynthesis; L-tryptophan from chorismate: step 2/5. Catalyzes the transfer of the phosphoribosyl group of 5-phosphorylribose-1-pyrophosphate (PRPP) to anthranilate to yield N-(5'-phosphoribosyl)-anthranilate (PRA). The protein is Anthranilate phosphoribosyltransferase of Mycobacterium sp. (strain KMS).